A 54-amino-acid chain; its full sequence is Hydrophobic protein RCI2B (54 aa).

2 helical membrane passes run 2 to 22 and 32 to 52; these read STAT…GVFL and ICLI…LYII.

This sequence belongs to the UPF0057 (PMP3) family.

Its subcellular location is the membrane. This chain is Hydrophobic protein RCI2B (RCI2B), found in Arabidopsis thaliana (Mouse-ear cress).